The primary structure comprises 207 residues: Small ribosomal subunit protein bS6c (207 aa).

The transit peptide at 1–59 (MASSLCVSNSTICPLPNVSSQPLLSFSHSLRPFISKSKPMCASIQKRDGSQFVVKSQAL) directs the protein to the chloroplast. A disordered region spans residues 69–99 (GFGSDDDPTSPSGSGVSTALEDKPEPQCPPG). Residues 77–86 (TSPSGSGVST) show a composition bias toward low complexity.

This sequence belongs to the bacterial ribosomal protein bS6 family. Part of the 30S ribosomal subunit.

It is found in the plastid. Its subcellular location is the chloroplast. Binds together with bS18 to 16S ribosomal RNA. In Arabidopsis thaliana (Mouse-ear cress), this protein is Small ribosomal subunit protein bS6c (RPS6).